Reading from the N-terminus, the 71-residue chain is Putative RNA-binding regulatory peptide (71 aa).

As to quaternary structure, interacts with IGF2BP1 (via KH3 and KH4 domains); the interaction results in increased binding of IGF2BP1 to N6-methyladenosine (m6A)-containing mRNAs. As to expression, detected in colon (at protein level).

Enhances binding of IGF2BP1 to N6-methyladenosine (m6A)-containing mRNAs, thereby contributing to increased mRNA stability. Also increases the interaction of IGF2BP1 with RNA stabilizers ELAVL1/HUR, MATR3 and PABPC1, and increases the interaction of RNA stabilizers ELAVL1/HUR, MATR3 and PABPC1 with m6A-containing mRNAs. Contributes to MYC stability by enhancing binding of IGF2BP1 to m6A-containing MYC mRNAs and increasing recruitment of RNA stabilizing proteins to m6A-containing MYC mRNAs. This is Putative RNA-binding regulatory peptide from Homo sapiens (Human).